The sequence spans 229 residues: MAKKKAFTPLLYLASLVFLPWWISLSFNKSLESWVTNWWNTRQSEIFLNGIQEKNILEKFIELEEILLLEEMIKEYSETHLQNLRIGIHKETIQFIKIHNEDRIHTILHFSTNIICFVILSGYSIWGNEELVILNSWAQEFLYNLSDTIKAFSILLLTDLCIGFHSPHGWELIIGSVYKDFGFVHNDQILSGLVSTFPVILDTLFKFWIFRYLNRVSPSLVVIYHSMND.

3 helical membrane-spanning segments follow: residues 7 to 27 (FTPL…SLSF), 114 to 134 (IICF…LVIL), and 189 to 209 (ILSG…KFWI).

It belongs to the CemA family.

The protein localises to the plastid. It is found in the chloroplast inner membrane. It carries out the reaction K(+)(in) + H(+)(out) = K(+)(out) + H(+)(in). Functionally, contributes to K(+)/H(+) antiport activity by supporting proton efflux to control proton extrusion and homeostasis in chloroplasts in a light-dependent manner to modulate photosynthesis. Prevents excessive induction of non-photochemical quenching (NPQ) under continuous-light conditions. Indirectly promotes efficient inorganic carbon uptake into chloroplasts. This is Potassium/proton antiporter CemA from Panax ginseng (Korean ginseng).